A 355-amino-acid chain; its full sequence is 3-dehydroquinate synthase (355 aa).

NAD(+) contacts are provided by residues 71–76 (EGEERK), 105–109 (GVVGD), 129–130 (TS), Lys142, and Lys151. Residues Glu184, His246, and His263 each contribute to the Zn(2+) site.

Belongs to the sugar phosphate cyclases superfamily. Dehydroquinate synthase family. The cofactor is Co(2+). It depends on Zn(2+) as a cofactor. NAD(+) serves as cofactor.

The protein localises to the cytoplasm. It catalyses the reaction 7-phospho-2-dehydro-3-deoxy-D-arabino-heptonate = 3-dehydroquinate + phosphate. It functions in the pathway metabolic intermediate biosynthesis; chorismate biosynthesis; chorismate from D-erythrose 4-phosphate and phosphoenolpyruvate: step 2/7. In terms of biological role, catalyzes the conversion of 3-deoxy-D-arabino-heptulosonate 7-phosphate (DAHP) to dehydroquinate (DHQ). This is 3-dehydroquinate synthase from Streptococcus pneumoniae (strain JJA).